A 364-amino-acid chain; its full sequence is Aminomethyltransferase (364 aa).

The protein belongs to the GcvT family. The glycine cleavage system is composed of four proteins: P, T, L and H.

The enzyme catalyses N(6)-[(R)-S(8)-aminomethyldihydrolipoyl]-L-lysyl-[protein] + (6S)-5,6,7,8-tetrahydrofolate = N(6)-[(R)-dihydrolipoyl]-L-lysyl-[protein] + (6R)-5,10-methylene-5,6,7,8-tetrahydrofolate + NH4(+). Functionally, the glycine cleavage system catalyzes the degradation of glycine. This is Aminomethyltransferase from Salmonella paratyphi B (strain ATCC BAA-1250 / SPB7).